The primary structure comprises 972 residues: Isoleucine--tRNA ligase (972 aa).

The short motif at 63 to 73 is the 'HIGH' region element; that stretch reads PYANGNIHIGH. Position 603 (glutamate 603) interacts with L-isoleucyl-5'-AMP. Residues 644–648 carry the 'KMSKS' region motif; the sequence is KMSKS. Lysine 647 lines the ATP pocket.

The protein belongs to the class-I aminoacyl-tRNA synthetase family. IleS type 1 subfamily. In terms of assembly, monomer.

It is found in the cytoplasm. It catalyses the reaction tRNA(Ile) + L-isoleucine + ATP = L-isoleucyl-tRNA(Ile) + AMP + diphosphate. In terms of biological role, catalyzes the attachment of isoleucine to tRNA(Ile). As IleRS can inadvertently accommodate and process structurally similar amino acids such as valine, to avoid such errors it has two additional distinct tRNA(Ile)-dependent editing activities. One activity is designated as 'pretransfer' editing and involves the hydrolysis of activated Val-AMP. The other activity is designated 'posttransfer' editing and involves deacylation of mischarged Val-tRNA(Ile). In Brucella suis biovar 1 (strain 1330), this protein is Isoleucine--tRNA ligase.